The following is a 414-amino-acid chain: MKIYLVGGAVRDSLLNLPVKDKDWVVVGGTEKILLERNFQQVGKDFPVFLHPETHEEYALARKERKSGKGYTGFDTDCNSDVTLEEDLIRRDLTINAIAQDEYGNYIDPFQGKKDIECGLIRHVSESFIEDPLRVLRVARFAATLVHLGFKIAEETMLLMCIIVKKQELSYLTSNRIWNETEKALKTLNPHVYFQVLYECNALHFFFPEMYFLYEKKNFLNRSFFKKFCNKNIILMGLAEISLLNKDIDVRFSYLCQFLSVNQIDRNYSKIFFDSYAASIIHSVCKRFKIPSYIRDIAVLNTGFYFFLNTIHYQSSKNIINLFSKVDAWRKPDRVKKLAFLSNFNFLRNFKSEFFCIKSGCFLEKCFSVVKNVSIKLILKKGFKGYEIKQEITRLRIKKLEFWRIKNIKHRFYL.

ATP contacts are provided by Gly8 and Arg11. Gly8 and Arg11 together coordinate CTP. Mg(2+) is bound by residues Asp21 and Asp23. ATP is bound by residues Arg91, Arg137, and Arg140. Residues Arg91, Arg137, and Arg140 each contribute to the CTP site.

Belongs to the tRNA nucleotidyltransferase/poly(A) polymerase family. Bacterial CCA-adding enzyme type 2 subfamily. It depends on Mg(2+) as a cofactor.

The catalysed reaction is a tRNA precursor + 2 CTP + ATP = a tRNA with a 3' CCA end + 3 diphosphate. The enzyme catalyses a tRNA with a 3' CCA end + 2 CTP + ATP = a tRNA with a 3' CCACCA end + 3 diphosphate. Functionally, catalyzes the addition and repair of the essential 3'-terminal CCA sequence in tRNAs without using a nucleic acid template. Adds these three nucleotides in the order of C, C, and A to the tRNA nucleotide-73, using CTP and ATP as substrates and producing inorganic pyrophosphate. tRNA 3'-terminal CCA addition is required both for tRNA processing and repair. Also involved in tRNA surveillance by mediating tandem CCA addition to generate a CCACCA at the 3' terminus of unstable tRNAs. While stable tRNAs receive only 3'-terminal CCA, unstable tRNAs are marked with CCACCA and rapidly degraded. This chain is CCA-adding enzyme, found in Buchnera aphidicola subsp. Acyrthosiphon pisum (strain 5A).